A 245-amino-acid polypeptide reads, in one-letter code: S-methyl-5'-thioinosine phosphorylase (245 aa).

Residues Thr10 and 52 to 53 (RH) each bind phosphate. Residue Met185 participates in substrate binding. Residue Thr186 participates in phosphate binding. Substrate is bound at residue 209–211 (NPA).

It belongs to the PNP/MTAP phosphorylase family. MTAP subfamily. As to quaternary structure, homotrimer.

It catalyses the reaction S-methyl-5'-thioinosine + phosphate = 5-(methylsulfanyl)-alpha-D-ribose 1-phosphate + hypoxanthine. The protein operates within purine metabolism; purine nucleoside salvage. Functionally, catalyzes the reversible phosphorylation of S-methyl-5'-thioinosine (MTI) to hypoxanthine and 5-methylthioribose-1-phosphate. Involved in the breakdown of S-methyl-5'-thioadenosine (MTA), a major by-product of polyamine biosynthesis. Catabolism of (MTA) occurs via deamination to MTI and phosphorolysis to hypoxanthine. Involved in quorum sensing. The chain is S-methyl-5'-thioinosine phosphorylase from Pseudomonas aeruginosa (strain ATCC 15692 / DSM 22644 / CIP 104116 / JCM 14847 / LMG 12228 / 1C / PRS 101 / PAO1).